Consider the following 166-residue polypeptide: NAD(P)H-quinone oxidoreductase subunit I, chloroplastic (166 aa).

2 4Fe-4S ferredoxin-type domains span residues Gly55–Lys84 and Leu95–Glu124. Residues Cys64, Cys67, Cys70, Cys74, Cys104, Cys107, Cys110, and Cys114 each coordinate [4Fe-4S] cluster.

Belongs to the complex I 23 kDa subunit family. As to quaternary structure, NDH is composed of at least 16 different subunits, 5 of which are encoded in the nucleus. Requires [4Fe-4S] cluster as cofactor.

It localises to the plastid. The protein localises to the chloroplast thylakoid membrane. It carries out the reaction a plastoquinone + NADH + (n+1) H(+)(in) = a plastoquinol + NAD(+) + n H(+)(out). The enzyme catalyses a plastoquinone + NADPH + (n+1) H(+)(in) = a plastoquinol + NADP(+) + n H(+)(out). Functionally, NDH shuttles electrons from NAD(P)H:plastoquinone, via FMN and iron-sulfur (Fe-S) centers, to quinones in the photosynthetic chain and possibly in a chloroplast respiratory chain. The immediate electron acceptor for the enzyme in this species is believed to be plastoquinone. Couples the redox reaction to proton translocation, and thus conserves the redox energy in a proton gradient. This chain is NAD(P)H-quinone oxidoreductase subunit I, chloroplastic, found in Silphium perfoliatum (Cup plant).